Reading from the N-terminus, the 347-residue chain is NAD-dependent alcohol dehydrogenase (347 aa).

The residue at position 11 (Lys11) is an N6-methyllysine. 7 residues coordinate Zn(2+): Cys38, His68, Glu98, Cys101, Cys104, Cys112, and Cys154. Lys213 bears the N6-methyllysine mark.

Belongs to the zinc-containing alcohol dehydrogenase family. In terms of assembly, homodimer and homotetramer. The cofactor is Zn(2+).

The catalysed reaction is a primary alcohol + NAD(+) = an aldehyde + NADH + H(+). The enzyme catalyses a secondary alcohol + NAD(+) = a ketone + NADH + H(+). In Sulfurisphaera tokodaii (strain DSM 16993 / JCM 10545 / NBRC 100140 / 7) (Sulfolobus tokodaii), this protein is NAD-dependent alcohol dehydrogenase (adh).